The primary structure comprises 201 residues: Small ribosomal subunit protein uS4c (201 aa).

Residues G20–G39 form a disordered region. The region spanning M89–N150 is the S4 RNA-binding domain.

It belongs to the universal ribosomal protein uS4 family. In terms of assembly, part of the 30S ribosomal subunit. Contacts protein S5. The interaction surface between S4 and S5 is involved in control of translational fidelity.

It is found in the plastid. The protein localises to the chloroplast. Functionally, one of the primary rRNA binding proteins, it binds directly to 16S rRNA where it nucleates assembly of the body of the 30S subunit. Its function is as follows. With S5 and S12 plays an important role in translational accuracy. This Oryza nivara (Indian wild rice) protein is Small ribosomal subunit protein uS4c (rps4).